The following is a 118-amino-acid chain: Large ribosomal subunit protein bL19 (118 aa).

The protein belongs to the bacterial ribosomal protein bL19 family.

Its function is as follows. This protein is located at the 30S-50S ribosomal subunit interface and may play a role in the structure and function of the aminoacyl-tRNA binding site. The polypeptide is Large ribosomal subunit protein bL19 (Dictyoglomus turgidum (strain DSM 6724 / Z-1310)).